The following is a 206-amino-acid chain: Small ribosomal subunit protein uS4 (206 aa).

The region spanning 96-156 (GRLDNVVYRM…EKSKKQARIK (61 aa)) is the S4 RNA-binding domain.

Belongs to the universal ribosomal protein uS4 family. Part of the 30S ribosomal subunit. Contacts protein S5. The interaction surface between S4 and S5 is involved in control of translational fidelity.

In terms of biological role, one of the primary rRNA binding proteins, it binds directly to 16S rRNA where it nucleates assembly of the body of the 30S subunit. Its function is as follows. With S5 and S12 plays an important role in translational accuracy. The polypeptide is Small ribosomal subunit protein uS4 (Pasteurella multocida (strain Pm70)).